Here is a 622-residue protein sequence, read N- to C-terminus: MIVPMKKVTLLVLGSEQERSLQALRSFGAVHVQLRECASEQLAELHALDARCVQAIALVTDAQTKNVTRGEECRVAGQVVEAAEAVEQIVRTHSDRVELAQRIAQCIAHLERCEPWGDFDPADVRALAQRGIHLIPVELSERSYRCLPDELQTLCLARRGGLVRCVLVADKPGLPPSLPADARALELPDVSPADLFVRLRQLREECATLTQRLLAYSEYQGAIRALRQKIAADIEFERVHLSMVSVDVSQWRETGETLRIAHVSGYLPVSRVRAFSECARKEAWAYCCVDPMPEDPVPTQLRNNRWVNLISPLMNFLGTVPGYWEVDISGFFLLFFGVFFSIIFADAGYGAVLTLVSLGGIVLSKRKHAVVSPAWCLGLYLGTLTMVWGALVCNWFGVPVQYVPASLARIAVWEISGFADAAQRNKNQMHVCFFLGLLHLCLGHLIVVRRTFRSLRVLAEFGSLLMLGGMYVVVLNLIVDKERYPLTGMIVGSIIAGFVLNFIFVNYRVSVRQSVADSMKNVINALLGIVNVFADVMSYIRLWAVGLAGGAISATVNEMTHPLFANFLAFLGIVLLLFGHGLNYVMSILSVIVHGVRLNTLEFSNHVGLMWTGIRYTPFRER.

A run of 8 helical transmembrane segments spans residues 306–326 (WVNLISPLMNFLGTVPGYWEV), 328–348 (ISGFFLLFFGVFFSIIFADAG), 373–393 (PAWCLGLYLGTLTMVWGALVC), 428–448 (QMHVCFFLGLLHLCLGHLIVV), 459–479 (AEFGSLLMLGGMYVVVLNLIV), 485–505 (PLTGMIVGSIIAGFVLNFIFV), 532–552 (VFADVMSYIRLWAVGLAGGAI), and 562–582 (PLFANFLAFLGIVLLLFGHGL).

It belongs to the V-ATPase 116 kDa subunit family.

The protein resides in the cell membrane. Functionally, produces ATP from ADP in the presence of a proton gradient across the membrane. The protein is V-type ATP synthase subunit I 1 (atpI1) of Treponema pallidum (strain Nichols).